Here is a 213-residue protein sequence, read N- to C-terminus: MARYIGPKLKLSRREGTDLGLKSGVKPYDVKTKKSARPPGQHGVSRNKSSEYSLQLREKQKVKRIYGVLERQFANYYKEAARKRGATGENLLAMLESRLDNVVYRMGFGSTRAEARQLVSHRTVMVKKAGRDEFVRVNIPSIQLQDGDVIAIQEKSREQLRIKNAIELATQRGIPEWLDVDHSKLQGTFKKAPDRIDLPAEINESLIVELYSK.

Residues 16–53 (GTDLGLKSGVKPYDVKTKKSARPPGQHGVSRNKSSEYS) form a disordered region. Residues 44-53 (VSRNKSSEYS) are compositionally biased toward polar residues. Residues 97–163 (SRLDNVVYRM…EKSREQLRIK (67 aa)) form the S4 RNA-binding domain.

The protein belongs to the universal ribosomal protein uS4 family. Part of the 30S ribosomal subunit. Contacts protein S5. The interaction surface between S4 and S5 is involved in control of translational fidelity.

One of the primary rRNA binding proteins, it binds directly to 16S rRNA where it nucleates assembly of the body of the 30S subunit. Functionally, with S5 and S12 plays an important role in translational accuracy. This is Small ribosomal subunit protein uS4 from Psychrobacter arcticus (strain DSM 17307 / VKM B-2377 / 273-4).